A 524-amino-acid chain; its full sequence is Bifunctional purine biosynthesis protein PurH (524 aa).

Residues 1 to 149 (MSDPLIKRAL…KNNESVTVLT (149 aa)) form the MGS-like domain.

This sequence belongs to the PurH family.

It carries out the reaction (6R)-10-formyltetrahydrofolate + 5-amino-1-(5-phospho-beta-D-ribosyl)imidazole-4-carboxamide = 5-formamido-1-(5-phospho-D-ribosyl)imidazole-4-carboxamide + (6S)-5,6,7,8-tetrahydrofolate. The catalysed reaction is IMP + H2O = 5-formamido-1-(5-phospho-D-ribosyl)imidazole-4-carboxamide. It functions in the pathway purine metabolism; IMP biosynthesis via de novo pathway; 5-formamido-1-(5-phospho-D-ribosyl)imidazole-4-carboxamide from 5-amino-1-(5-phospho-D-ribosyl)imidazole-4-carboxamide (10-formyl THF route): step 1/1. It participates in purine metabolism; IMP biosynthesis via de novo pathway; IMP from 5-formamido-1-(5-phospho-D-ribosyl)imidazole-4-carboxamide: step 1/1. The polypeptide is Bifunctional purine biosynthesis protein PurH (Chlorobium phaeovibrioides (strain DSM 265 / 1930) (Prosthecochloris vibrioformis (strain DSM 265))).